The primary structure comprises 666 residues: Magnesium-chelatase 67 kDa subunit (666 aa).

An ATP-binding site is contributed by 37 to 44; sequence GRRGTGKT. Residues 327-367 form a disordered region; it reads LPDEEEQMQPPPPPPPPPPPPEPDKPDDPETPPDEAPKDEQ. Over residues 335 to 347 the composition is skewed to pro residues; that stretch reads QPPPPPPPPPPPP. One can recognise a VWFA domain in the interval 475–661; sequence LIIFVVDASG…SLAETVKSGV (187 aa).

Belongs to the Mg-chelatase subunits D/I family.

The catalysed reaction is protoporphyrin IX + Mg(2+) + ATP + H2O = Mg-protoporphyrin IX + ADP + phosphate + 3 H(+). It functions in the pathway porphyrin-containing compound metabolism; bacteriochlorophyll biosynthesis. In terms of biological role, involved in bacteriochlorophyll biosynthesis; introduces a magnesium ion into protoporphyrin IX to yield Mg-protoporphyrin IX. This Heliobacterium mobile (Heliobacillus mobilis) protein is Magnesium-chelatase 67 kDa subunit (bchD).